A 464-amino-acid chain; its full sequence is 3-isopropylmalate dehydratase large subunit (464 aa).

The [4Fe-4S] cluster site is built by C337, C397, and C400.

The protein belongs to the aconitase/IPM isomerase family. LeuC type 1 subfamily. Heterodimer of LeuC and LeuD. It depends on [4Fe-4S] cluster as a cofactor.

It carries out the reaction (2R,3S)-3-isopropylmalate = (2S)-2-isopropylmalate. Its pathway is amino-acid biosynthesis; L-leucine biosynthesis; L-leucine from 3-methyl-2-oxobutanoate: step 2/4. In terms of biological role, catalyzes the isomerization between 2-isopropylmalate and 3-isopropylmalate, via the formation of 2-isopropylmaleate. The protein is 3-isopropylmalate dehydratase large subunit of Bacillus cereus (strain ATCC 10987 / NRS 248).